A 35-amino-acid polypeptide reads, in one-letter code: Photosystem II reaction center protein T (35 aa).

A helical transmembrane segment spans residues 3 to 23 (ALVYTFLLVSTLGIIFFAIFF).

It belongs to the PsbT family. As to quaternary structure, PSII is composed of 1 copy each of membrane proteins PsbA, PsbB, PsbC, PsbD, PsbE, PsbF, PsbH, PsbI, PsbJ, PsbK, PsbL, PsbM, PsbT, PsbY, PsbZ, Psb30/Ycf12, at least 3 peripheral proteins of the oxygen-evolving complex and a large number of cofactors. It forms dimeric complexes.

The protein localises to the plastid. It localises to the chloroplast thylakoid membrane. Its function is as follows. Found at the monomer-monomer interface of the photosystem II (PS II) dimer, plays a role in assembly and dimerization of PSII. PSII is a light-driven water plastoquinone oxidoreductase, using light energy to abstract electrons from H(2)O, generating a proton gradient subsequently used for ATP formation. The polypeptide is Photosystem II reaction center protein T (Metasequoia glyptostroboides (Dawn redwood)).